Consider the following 529-residue polypeptide: ATP synthase F(1) complex subunit beta, mitochondrial (529 aa).

The N-terminal 47 residues, 1–47, are a transit peptide targeting the mitochondrion; it reads MLGFVGRVAAAPASGALRRLTPSASLPPAQLLLRAAPTAVHPVRDYA. An O-linked (GlcNAc) serine glycan is attached at Ser-106. 3 positions are modified to N6-acetyllysine; alternate: Lys-124, Lys-133, and Lys-161. Lys-124, Lys-133, and Lys-161 each carry N6-succinyllysine; alternate. Lys-198 carries the post-translational modification N6-acetyllysine. Residues Gly-209, Val-210, Gly-211, Lys-212, Thr-213, and Val-214 each coordinate ADP. Gly-209 contacts ATP. Phosphate-binding residues include Gly-209, Val-210, Gly-211, Lys-212, and Thr-213. Residues Gly-211, Lys-212, Thr-213, and Val-214 each coordinate ATP. Thr-213 is a Mg(2+) binding site. Glu-238 provides a ligand contact to Mg(2+). Arg-239 serves as a coordination point for ATP. N6-acetyllysine; alternate is present on residues Lys-259 and Lys-264. Lys-259 and Lys-264 each carry N6-succinyllysine; alternate. A Phosphothreonine modification is found at Thr-312. Residue Ser-415 is modified to Phosphoserine. The residue at position 426 (Lys-426) is an N6-acetyllysine. A Phosphoserine modification is found at Ser-433. N6-acetyllysine occurs at positions 480 and 485. Lys-522 is subject to N6-acetyllysine; alternate. Lys-522 is subject to N6-succinyllysine; alternate. Ser-529 is subject to Phosphoserine.

Belongs to the ATPase alpha/beta chains family. As to quaternary structure, homotrimer. Component of the ATP synthase complex composed at least of ATP5F1A/subunit alpha, ATP5F1B/subunit beta, ATP5MC1/subunit c (homooctomer), MT-ATP6/subunit a, MT-ATP8/subunit 8, ATP5ME/subunit e, ATP5MF/subunit f, ATP5MG/subunit g, ATP5MK/subunit k, ATP5MJ/subunit j, ATP5F1C/subunit gamma, ATP5F1D/subunit delta, ATP5F1E/subunit epsilon, ATP5PF/subunit F6, ATP5PB/subunit b, ATP5PD/subunit d, ATP5PO/subunit OSCP. ATP synthase complex consists of a soluble F(1) head domain (subunits alpha(3) and beta(3)) - the catalytic core - and a membrane F(0) domain - the membrane proton channel (subunits c, a, 8, e, f, g, k and j). These two domains are linked by a central stalk (subunits gamma, delta, and epsilon) rotating inside the F1 region and a stationary peripheral stalk (subunits F6, b, d, and OSCP). Interacts with PPIF. Interacts with BCL2L1 isoform BCL-X(L); the interaction mediates the association of BCL2L1 isoform BCL-X(L) with the mitochondrial membrane F(1)F(0) ATP synthase and enhances neurons metabolic efficiency. Interacts with CLN5 and PPT1. Interacts with S100A1; this interaction increases F1-ATPase activity. Interacts with MTLN. Interacts with TTC5/STRAP; the interaction results in decreased mitochondrial ATP production. Mg(2+) serves as cofactor.

It is found in the mitochondrion inner membrane. The catalysed reaction is ATP + H2O + 4 H(+)(in) = ADP + phosphate + 5 H(+)(out). Catalytic subunit beta, of the mitochondrial membrane ATP synthase complex (F(1)F(0) ATP synthase or Complex V) that produces ATP from ADP in the presence of a proton gradient across the membrane which is generated by electron transport complexes of the respiratory chain. ATP synthase complex consist of a soluble F(1) head domain - the catalytic core - and a membrane F(1) domain - the membrane proton channel. These two domains are linked by a central stalk rotating inside the F(1) region and a stationary peripheral stalk. During catalysis, ATP synthesis in the catalytic domain of F(1) is coupled via a rotary mechanism of the central stalk subunits to proton translocation. In vivo, can only synthesize ATP although its ATP hydrolase activity can be activated artificially in vitro. With the subunit alpha (ATP5F1A), forms the catalytic core in the F(1) domain. The polypeptide is ATP synthase F(1) complex subunit beta, mitochondrial (Homo sapiens (Human)).